Here is a 60-residue protein sequence, read N- to C-terminus: MRCLPVFVILLLLIASAPGVDAQPKTKYDVPLASRHDFAKKTPKRLSKPRDCCRRNFLCC.

The signal sequence occupies residues 1–22 (MRCLPVFVILLLLIASAPGVDA). Positions 23 to 50 (QPKTKYDVPLASRHDFAKKTPKRLSKPR) are excised as a propeptide.

The protein belongs to the conotoxin T superfamily. Contains 2 disulfide bonds that can be either 'C1-C3, C2-C4' or 'C1-C4, C2-C3', since these disulfide connectivities have been observed for conotoxins with cysteine framework V (for examples, see AC P0DQQ7 and AC P81755). Expressed by the venom duct.

The protein resides in the secreted. The polypeptide is Conotoxin VnMRCL-012 (Conus ventricosus (Mediterranean cone)).